The following is a 322-amino-acid chain: tRNA uridine(34) hydroxylase (322 aa).

The 95-residue stretch at 125–219 folds into the Rhodanese domain; the sequence is QSPDTVVIDA…YGKDPEVQGK (95 aa). Cys-179 functions as the Cysteine persulfide intermediate in the catalytic mechanism.

The protein belongs to the TrhO family.

It catalyses the reaction uridine(34) in tRNA + AH2 + O2 = 5-hydroxyuridine(34) in tRNA + A + H2O. Functionally, catalyzes oxygen-dependent 5-hydroxyuridine (ho5U) modification at position 34 in tRNAs. The polypeptide is tRNA uridine(34) hydroxylase (Bacillus pumilus (strain SAFR-032)).